The chain runs to 650 residues: Acetyl-coenzyme A synthetase (650 aa).

CoA is bound by residues 189 to 192 (RGGK), Thr307, and Asn331. Residues 383–385 (GEP), 407–412 (DTWWQT), Asp496, and Arg511 contribute to the ATP site. Ser519 contributes to the CoA binding site. Arg522 is a binding site for ATP. Mg(2+) is bound by residues Val533, His535, and Val538. A CoA-binding site is contributed by Arg580. An N6-acetyllysine modification is found at Lys605.

Belongs to the ATP-dependent AMP-binding enzyme family. Mg(2+) is required as a cofactor. Acetylated. Deacetylation by the SIR2-homolog deacetylase activates the enzyme.

The catalysed reaction is acetate + ATP + CoA = acetyl-CoA + AMP + diphosphate. Functionally, catalyzes the conversion of acetate into acetyl-CoA (AcCoA), an essential intermediate at the junction of anabolic and catabolic pathways. AcsA undergoes a two-step reaction. In the first half reaction, AcsA combines acetate with ATP to form acetyl-adenylate (AcAMP) intermediate. In the second half reaction, it can then transfer the acetyl group from AcAMP to the sulfhydryl group of CoA, forming the product AcCoA. The sequence is that of Acetyl-coenzyme A synthetase from Syntrophobacter fumaroxidans (strain DSM 10017 / MPOB).